The sequence spans 170 residues: 6,7-dimethyl-8-ribityllumazine synthase (170 aa).

Residues tryptophan 25, 57 to 59 (AVE), and 79 to 81 (AVI) each bind 5-amino-6-(D-ribitylamino)uracil. 84–85 (DT) is a binding site for (2S)-2-hydroxy-3-oxobutyl phosphate. Histidine 87 serves as the catalytic Proton donor. Residue asparagine 112 participates in 5-amino-6-(D-ribitylamino)uracil binding. Arginine 126 lines the (2S)-2-hydroxy-3-oxobutyl phosphate pocket.

It belongs to the DMRL synthase family.

It carries out the reaction (2S)-2-hydroxy-3-oxobutyl phosphate + 5-amino-6-(D-ribitylamino)uracil = 6,7-dimethyl-8-(1-D-ribityl)lumazine + phosphate + 2 H2O + H(+). The protein operates within cofactor biosynthesis; riboflavin biosynthesis; riboflavin from 2-hydroxy-3-oxobutyl phosphate and 5-amino-6-(D-ribitylamino)uracil: step 1/2. Its function is as follows. Catalyzes the formation of 6,7-dimethyl-8-ribityllumazine by condensation of 5-amino-6-(D-ribitylamino)uracil with 3,4-dihydroxy-2-butanone 4-phosphate. This is the penultimate step in the biosynthesis of riboflavin. The sequence is that of 6,7-dimethyl-8-ribityllumazine synthase from Thermobifida fusca (strain YX).